The primary structure comprises 299 residues: Coenzyme PQQ synthesis protein B (299 aa).

The protein belongs to the PqqB family.

It participates in cofactor biosynthesis; pyrroloquinoline quinone biosynthesis. Functionally, may be involved in the transport of PQQ or its precursor to the periplasm. The chain is Coenzyme PQQ synthesis protein B from Xanthomonas axonopodis pv. citri (strain 306).